Reading from the N-terminus, the 326-residue chain is Ribosomal large subunit pseudouridine synthase D (326 aa).

Asp144 is a catalytic residue.

Belongs to the pseudouridine synthase RluA family.

Its subcellular location is the cytoplasm. The catalysed reaction is uridine(1911/1915/1917) in 23S rRNA = pseudouridine(1911/1915/1917) in 23S rRNA. Its function is as follows. Responsible for synthesis of pseudouridine from uracil at positions 1911, 1915 and 1917 in 23S ribosomal RNA. The protein is Ribosomal large subunit pseudouridine synthase D of Borreliella burgdorferi (strain ATCC 35210 / DSM 4680 / CIP 102532 / B31) (Borrelia burgdorferi).